A 685-amino-acid chain; its full sequence is MAYQEKITEFKNWATNLGCPPTALPTDDALRRIFKSGSSLLLNQLQSRIQPVDYVREVRENLLIAQVARYKDKMVPLASRSFQPPELQRYQKIQELKKHKEKANQQLTEARKEYQKLSAGIKTKNIQTISAENRKQLLESKCNILDLKLESLNKNYDQELKNKIQILGTTPVKLSARNASEAQATRAVEQALKQLETFYGMCDDGNAVNNLAEAKQRLWDQMRSTFADIPNSLLLNVVMKIKEEQLQHIMKLNESRGECTNDKPPLNNYEVKLLKTKADMLGLAAKYFAAQKELELKEERFCQDYSVFVDKLQSKVYRFNGISLGDEENADELISDYLVQYNMRNFNRSQNEFLREQIEQLRLELDAGAKQLENHDLKLGSVKQVYGDINSSINRIQQDMVQLSQIKEKILFSRNMMKNLLDDMQAATQKQNAKSQLMSTKLKVSNMSMLGAESFCLANDSVFSSTKVEFDGNCSAINSTMRRSFDNKTLVPGGAASTTLMAASGATLPSHLLEFNTFLEIPLEKFSCTPRACSFLLSANPLIVEAQELASTVQLAPGYLLTPFGALQEVRKRILWASAIAAHTSELKLNLQPLIVDPHDLRLKASRQHEEIDQLLDNLMAIGVKTQLQLEKAERIYQFLLENPLRRYVPPSKRYNNGSFADYESEFNLYYRMTTNGSSMRAPPN.

Coiled-coil stretches lie at residues 87–165 (LQRY…NKIQ) and 342–379 (NMRNFNRSQNEFLREQIEQLRLELDAGAKQLENHDLKL).

As to quaternary structure, component of the augmin complex composed of dgt2, dgt3, dgt4, dgt5, dgt6, msd1, msd5 and wac. The complex interacts directly or indirectly with microtubules and is required for centrosome-independent generation of spindle microtubules.

The protein localises to the cytoplasm. It is found in the cytoskeleton. It localises to the spindle. Its subcellular location is the chromosome. The protein resides in the centromere. The protein localises to the kinetochore. It is found in the microtubule organizing center. It localises to the centrosome. Functionally, as part of the augmin complex, plays a role in centrosome-independent generation of spindle microtubules. The complex is required for mitotic spindle assembly through its involvement in localizing gamma-tubulin to spindle microtubules. In Drosophila melanogaster (Fruit fly), this protein is Augmin complex subunit dgt5.